An 84-amino-acid polypeptide reads, in one-letter code: Anthracycline acyl carrier protein DauA (84 aa).

Positions 3 to 80 (ELSLAELREI…SMLIFVNERL (78 aa)) constitute a Carrier domain. Ser-40 carries the O-(pantetheine 4'-phosphoryl)serine modification.

It functions in the pathway antibiotic biosynthesis; daunorubicin biosynthesis. It participates in antibiotic biosynthesis; carminomycin biosynthesis. Its pathway is antibiotic biosynthesis; rhodomycin biosynthesis. The protein operates within antibiotic biosynthesis; aclacinomycin biosynthesis. Functionally, involved in the biosynthesis of aklanonate which is an important precursor common to the formation of the clinically significant anthracyclines such as carminomycin, daunorubicin (daunomycin), rhodomycin, aclacinomycin T (aklavin) and aclacinomycin A (aclarubicin). These compounds are aromatic polyketide antibiotics that exhibit high cytotoxicity and are widely applied in the chemotherapy of a variety of cancers. The protein is Anthracycline acyl carrier protein DauA (dauA) of Streptomyces sp. (strain C5).